A 414-amino-acid chain; its full sequence is Transcriptional repressor protein YY1 (414 aa).

The tract at residues 1–170 (MASGDTLYIA…GGGSSSSGGG (170 aa)) is interaction with the SMAD1/SMAD4 complex. The disordered stretch occupies residues 33 to 81 (VETIETTVVGEEEEEDDDDEDGGGGDHGGGGGHGHAGHHHHHHHHHHHP). The segment covering 42–55 (GEEEEEDDDDEDGG) has biased composition (acidic residues). Gly residues predominate over residues 57–66 (GDHGGGGGHG). The segment covering 67 to 81 (HAGHHHHHHHHHHHP) has biased composition (basic residues). The tract at residues 116–260 (DDSDGLRAED…YSEYMTGKKL (145 aa)) is gly-rich region involved in interaction with HCFC1. Ser118 is modified (phosphoserine; by CK2). Residues 157–203 (GKSGGGGSSSSGGGRVKKGGGKKSGKKSYLSGGAGAAGGGGADPGNK) form a disordered region. Positions 158 to 170 (KSGGGGSSSSGGG) are enriched in gly residues. Positions 171–182 (RVKKGGGKKSGK) are enriched in basic residues. Glycyl lysine isopeptide (Lys-Gly) (interchain with G-Cter in SUMO2) cross-links involve residues Lys182 and Lys183. Ser187 is subject to Phosphoserine. Gly residues predominate over residues 188-199 (GGAGAAGGGGAD). Glycyl lysine isopeptide (Lys-Gly) (interchain with G-Cter in SUMO2) cross-links involve residues Lys208 and Lys230. Ser247 carries the phosphoserine modification. The segment at 257–341 (GKKLPPGGIP…KAFVESSKLK (85 aa)) is involved in nuclear matrix association. Residues Lys286 and Lys288 each participate in a glycyl lysine isopeptide (Lys-Gly) (interchain with G-Cter in SUMO2) cross-link. The segment at 295–414 (TIACPHKGCT…LTHAKAKNNQ (120 aa)) is binding to DNA. C2H2-type zinc fingers lie at residues 296–320 (IACP…LHTH), 325–347 (HVCA…QLVH), and 353–377 (FQCT…VRIH). 12 residues coordinate Zn(2+): Cys298, Cys303, His316, His320, Cys327, Cys330, His343, His347, Cys355, Cys360, His373, and His377. The tract at residues 333–371 (AFVESSKLKRHQLVHTGEKPFQCTFEGCGKRFSLDFNLR) is involved in repression of activated transcription. The interval 371-397 (RTHVRIHTGDRPYVCPFDGCNKKFAQS) is involved in masking transactivation domain. Residue Thr378 is modified to Phosphothreonine. Residues 383 to 407 (YVCPFDGCNKKFAQSTNLKSHILTH) form a C2H2-type 4 zinc finger. 4 residues coordinate Zn(2+): Cys385, Cys390, His403, and His407. Residues Lys409 and Lys411 each participate in a glycyl lysine isopeptide (Lys-Gly) (interchain with G-Cter in SUMO2) cross-link.

It belongs to the YY transcription factor family. Interacts with YAF2 through the region encompassing the first and second zinc fingers. Component of the chromatin remodeling INO80 complex; specifically part of a complex module associated with the DBINO domain of INO80. Interacts with EED and EZH2; the interactions are indicative for an association with the PRC2/EED-EZH2 complex. Interacts with SFMBT2. Found in a complex with SMAD1 and SMAD4. Found in a complex with YY1, SIN3A and HDAC1. Accessory component of the polycomb repressive deubiquitinase (PR-DUB) complex, at least composed of BAP1, one of ASXL1, ASXL2 or (probably) ASXL3 and one of MBD5 or MBD6; the PR-DUB core associates with a number of accessory proteins, including FOXK1, FOXK2, KDM1B, HCFC1, YY1 and OGT. Interacts (via Gly-rich region) with HCFC1; the interaction is direct. Interacts (via C-terminal zinc-finger domains) with BAP1 (via ULD domain); the interaction is direct and requires HCFC1. In terms of processing, phosphorylation at Ser-118 by CK2 prevents proteolytic cleavage by caspase-7 (CASP7) during apoptosis. Post-translationally, proteolytically cleaved by caspase-7 (CASP7) in response to apoptosis. Phosphorylation at Ser-118 protects against proteolytic cleavage. Transiently poly-ADP-ribosylated by PARP1 upon DNA damage, with the effect of decreasing affinity of YY1 to its cognate DNA binding sites. In terms of processing, ubiquitinated.

It is found in the nucleus matrix. Its function is as follows. Multifunctional transcription factor that exhibits positive and negative control on a large number of cellular and viral genes by binding to sites overlapping the transcription start site. Binds to the consensus sequence 5'-CCGCCATNTT-3'; some genes have been shown to contain a longer binding motif allowing enhanced binding; the initial CG dinucleotide can be methylated greatly reducing the binding affinity. The effect on transcription regulation is depending upon the context in which it binds and diverse mechanisms of action include direct activation or repression, indirect activation or repression via cofactor recruitment, or activation or repression by disruption of binding sites or conformational DNA changes. Its activity is regulated by transcription factors and cytoplasmic proteins that have been shown to abrogate or completely inhibit YY1-mediated activation or repression. For example, it acts as a repressor in absence of adenovirus E1A protein but as an activator in its presence. Acts synergistically with the SMAD1 and SMAD4 in bone morphogenetic protein (BMP)-mediated cardiac-specific gene expression. Binds to SMAD binding elements (SBEs) (5'-GTCT/AGAC-3') within BMP response element (BMPRE) of cardiac activating regions. May play an important role in development and differentiation. Proposed to recruit the PRC2/EED-EZH2 complex to target genes that are transcriptional repressed. Involved in DNA repair. In vitro, binds to DNA recombination intermediate structures (Holliday junctions). Plays a role in regulating enhancer activation. Recruits the PR-DUB complex to specific gene-regulatory regions. Functionally, proposed core component of the chromatin remodeling INO80 complex which is involved in transcriptional regulation, DNA replication and probably DNA repair; proposed to target the INO80 complex to YY1-responsive elements. The protein is Transcriptional repressor protein YY1 (YY1) of Homo sapiens (Human).